A 193-amino-acid polypeptide reads, in one-letter code: uncharacterized protein (193 aa).

Arg8 is a substrate binding site. The active-site Tele-phosphohistidine intermediate is His9. The substrate site is built by Asn15, Gln21, and Arg58. Glu82 serves as the catalytic Proton donor/acceptor. His139 lines the substrate pocket.

Belongs to the phosphoglycerate mutase family. GpmB subfamily.

Its function is as follows. Phosphatase with broad substrate specificity. Does not have phosphoglycerate mutase activity. This is an uncharacterized protein from Bacillus subtilis (strain 168).